A 211-amino-acid polypeptide reads, in one-letter code: Ribonuclease HII (211 aa).

Residues 24–211 (QLIAGVDEVG…KPVKKALGLD (188 aa)) form the RNase H type-2 domain. The a divalent metal cation site is built by Asp30, Glu31, and Asp122.

Belongs to the RNase HII family. Requires Mn(2+) as cofactor. The cofactor is Mg(2+).

Its subcellular location is the cytoplasm. It carries out the reaction Endonucleolytic cleavage to 5'-phosphomonoester.. Functionally, endonuclease that specifically degrades the RNA of RNA-DNA hybrids. The chain is Ribonuclease HII from Vibrio parahaemolyticus serotype O3:K6 (strain RIMD 2210633).